The sequence spans 896 residues: Serine/threonine-protein kinase TAO3 (896 aa).

In terms of domain architecture, Protein kinase spans 24–277 (FVDLHEIGHG…SLELLRHDFV (254 aa)). Residues 30 to 38 (IGHGSFGAV) and lysine 53 each bind ATP. Residue aspartate 147 is the Proton acceptor of the active site. Disordered stretches follow at residues 316-366 (SRNG…SVNS) and 403-423 (DEAD…VQSQ). The segment covering 334–348 (GTSLTRKMDSLGSNH) has biased composition (polar residues). A compositionally biased stretch (low complexity) spans 349–366 (SIPSTSVSTGSQSSSVNS). Residues 403 to 414 (DEADHRDPRPEL) show a composition bias toward basic and acidic residues. 3 coiled-coil regions span residues 450–513 (EQEN…SKRQ), 545–650 (SFLE…LIRQ), and 752–873 (LKSL…IETF). Over residues 565–587 (LNEDHSTPKKEKQERISKHKENL) the composition is skewed to basic and acidic residues. A disordered region spans residues 565-593 (LNEDHSTPKKEKQERISKHKENLQHTQAE).

This sequence belongs to the protein kinase superfamily. STE Ser/Thr protein kinase family. STE20 subfamily.

It is found in the cytoplasm. The protein localises to the cell membrane. Its subcellular location is the membrane raft. The protein resides in the lipid droplet. The catalysed reaction is L-seryl-[protein] + ATP = O-phospho-L-seryl-[protein] + ADP + H(+). It catalyses the reaction L-threonyl-[protein] + ATP = O-phospho-L-threonyl-[protein] + ADP + H(+). Functionally, serine/threonine-protein kinase that acts as a regulator of the p38/MAPK14 stress-activated MAPK cascade and of the MAPK8/JNK cascade. In response to DNA damage, involved in the G2/M transition DNA damage checkpoint by activating the p38/MAPK14 stress-activated MAPK cascade, probably by mediating phosphorylation of upstream MAP kinase kinases. Inhibits basal activity of the MAPK8/JNK cascade. The polypeptide is Serine/threonine-protein kinase TAO3 (taok3) (Xenopus laevis (African clawed frog)).